Here is a 1118-residue protein sequence, read N- to C-terminus: Isoleucine--tRNA ligase (1118 aa).

The short motif at 64–74 (PFANGLPHYGH) is the 'HIGH' region element. The short motif at 647–651 (KLSKR) is the 'KMSKS' region element. Lysine 650 lines the ATP pocket.

This sequence belongs to the class-I aminoacyl-tRNA synthetase family. IleS type 2 subfamily. In terms of assembly, monomer. It depends on Zn(2+) as a cofactor.

Its subcellular location is the cytoplasm. It carries out the reaction tRNA(Ile) + L-isoleucine + ATP = L-isoleucyl-tRNA(Ile) + AMP + diphosphate. Catalyzes the attachment of isoleucine to tRNA(Ile). As IleRS can inadvertently accommodate and process structurally similar amino acids such as valine, to avoid such errors it has two additional distinct tRNA(Ile)-dependent editing activities. One activity is designated as 'pretransfer' editing and involves the hydrolysis of activated Val-AMP. The other activity is designated 'posttransfer' editing and involves deacylation of mischarged Val-tRNA(Ile). This Ehrlichia ruminantium (strain Gardel) protein is Isoleucine--tRNA ligase.